The chain runs to 136 residues: Large ribosomal subunit protein uL16c (136 aa).

The interval 1-20 (MLSPKRTKFRKQHRGRMKGK) is disordered.

This sequence belongs to the universal ribosomal protein uL16 family. As to quaternary structure, part of the 50S ribosomal subunit.

The protein resides in the plastid. Its subcellular location is the chloroplast. The protein is Large ribosomal subunit protein uL16c of Brachypodium distachyon (Purple false brome).